The primary structure comprises 316 residues: 4-diphosphocytidyl-2-C-methyl-D-erythritol kinase (316 aa).

Residue lysine 11 is part of the active site. Proline 99 to threonine 109 is a binding site for ATP. Aspartate 141 is an active-site residue.

This sequence belongs to the GHMP kinase family. IspE subfamily.

It catalyses the reaction 4-CDP-2-C-methyl-D-erythritol + ATP = 4-CDP-2-C-methyl-D-erythritol 2-phosphate + ADP + H(+). It participates in isoprenoid biosynthesis; isopentenyl diphosphate biosynthesis via DXP pathway; isopentenyl diphosphate from 1-deoxy-D-xylulose 5-phosphate: step 3/6. In terms of biological role, catalyzes the phosphorylation of the position 2 hydroxy group of 4-diphosphocytidyl-2C-methyl-D-erythritol. The protein is 4-diphosphocytidyl-2-C-methyl-D-erythritol kinase of Gloeothece citriformis (strain PCC 7424) (Cyanothece sp. (strain PCC 7424)).